The following is a 209-amino-acid chain: Ribosomal RNA large subunit methyltransferase E (209 aa).

S-adenosyl-L-methionine-binding residues include glycine 63, tryptophan 65, aspartate 83, aspartate 99, and aspartate 124. The active-site Proton acceptor is the lysine 164.

The protein belongs to the class I-like SAM-binding methyltransferase superfamily. RNA methyltransferase RlmE family.

The protein localises to the cytoplasm. The enzyme catalyses uridine(2552) in 23S rRNA + S-adenosyl-L-methionine = 2'-O-methyluridine(2552) in 23S rRNA + S-adenosyl-L-homocysteine + H(+). Functionally, specifically methylates the uridine in position 2552 of 23S rRNA at the 2'-O position of the ribose in the fully assembled 50S ribosomal subunit. The sequence is that of Ribosomal RNA large subunit methyltransferase E from Vibrio vulnificus (strain CMCP6).